We begin with the raw amino-acid sequence, 414 residues long: F-box protein At3g26010 (414 aa).

Residues 5-52 (NRTIHLTDAIWTEILARLPLRIIARFKSVSKTWKSTIESVYFRRLFVS) form the F-box domain.

This is F-box protein At3g26010 from Arabidopsis thaliana (Mouse-ear cress).